We begin with the raw amino-acid sequence, 645 residues long: DNA mismatch repair protein MutL (645 aa).

Disordered regions lie at residues 353–381 and 395–420; these read RPEN…FGPQ and QGEP…PTTG.

It belongs to the DNA mismatch repair MutL/HexB family.

In terms of biological role, this protein is involved in the repair of mismatches in DNA. It is required for dam-dependent methyl-directed DNA mismatch repair. May act as a 'molecular matchmaker', a protein that promotes the formation of a stable complex between two or more DNA-binding proteins in an ATP-dependent manner without itself being part of a final effector complex. This chain is DNA mismatch repair protein MutL, found in Pseudomonas syringae pv. tomato (strain ATCC BAA-871 / DC3000).